A 452-amino-acid chain; its full sequence is Gamma-aminobutyric acid receptor subunit delta (452 aa).

The N-terminal stretch at 1–24 (MDAPARLLAPLLLLCAQQLRGTRA) is a signal peptide. At 25-251 (MNDIGDYVGS…HLRRNRGVYI (227 aa)) the chain is on the extracellular side. N-linked (GlcNAc...) asparagine glycans are attached at residues Asn-103 and Asn-106. Cys-164 and Cys-178 are joined by a disulfide. The helical transmembrane segment at 252-271 (IQSYMPSVLLVAMSWVSFWI) threads the bilayer. The Cytoplasmic portion of the chain corresponds to 272–275 (SQAA). A helical membrane pass occupies residues 276-298 (VPARVSLGITTVLTMTTLMVSAR). The Extracellular portion of the chain corresponds to 299–308 (SSLPRASAIK). The helical transmembrane segment at 309-331 (ALDVYFWICYVFVFAALVEYAFA) threads the bilayer. The Cytoplasmic segment spans residues 332–426 (HFNADYRKKQ…ARLRPIDADT (95 aa)). Ser-390 carries the post-translational modification Phosphoserine. The helical transmembrane segment at 427 to 449 (IDIYARAVFPAAFAAVNVIYWAA) threads the bilayer. The Extracellular segment spans residues 450-452 (YAM).

Belongs to the ligand-gated ion channel (TC 1.A.9) family. Gamma-aminobutyric acid receptor (TC 1.A.9.5) subfamily. GABRD sub-subfamily. As to quaternary structure, heteropentamer, formed by a combination of alpha (GABRA1-6), beta (GABRB1-3), gamma (GABRG1-3), delta (GABRD), epsilon (GABRE), rho (GABRR1-3), pi (GABRP) and theta (GABRQ) chains, each subunit exhibiting distinct physiological and pharmacological properties.

The protein resides in the cell membrane. The enzyme catalyses chloride(in) = chloride(out). Delta subunit of the heteropentameric ligand-gated chloride channel gated by gamma-aminobutyric acid (GABA), a major inhibitory neurotransmitter in the brain. GABA-gated chloride channels, also named GABA(A) receptors (GABAAR), consist of five subunits arranged around a central pore and contain GABA active binding site(s) located at the alpha and beta subunit interface(s). When activated by GABA, GABAARs selectively allow the flow of chloride anions across the cell membrane down their electrochemical gradient. GABAARs containing delta/GABRD subunits are predominantly located in extrasynaptic or perisynaptic positions on hippocampus and cerebellar granule cells, and contribute to the tonic GABAergic inhibition. GABAAR containing alpha-4-beta-3-delta subunits can simultaneously bind GABA and histamine where histamine binds at the interface of two neighboring beta subunits, which may be involved in the regulation of sleep and wakefulness. The protein is Gamma-aminobutyric acid receptor subunit delta of Homo sapiens (Human).